A 1157-amino-acid polypeptide reads, in one-letter code: ATP-dependent helicase/deoxyribonuclease subunit B (1157 aa).

The 277-residue stretch at 1-277 (MTLQIIAGKA…KILLENKRAN (277 aa)) folds into the UvrD-like helicase ATP-binding domain. ATP is bound at residue 8-15 (GKAGTGKT). The UvrD-like helicase C-terminal domain maps to 271-590 (LENKRANSDS…VLADMENAKL (320 aa)). 4 residues coordinate [4Fe-4S] cluster: Cys794, Cys1115, Cys1118, and Cys1124.

Belongs to the helicase family. AddB/RexB type 1 subfamily. As to quaternary structure, heterodimer of AddA and AddB. Mg(2+) serves as cofactor. [4Fe-4S] cluster is required as a cofactor.

Functionally, the heterodimer acts as both an ATP-dependent DNA helicase and an ATP-dependent, dual-direction single-stranded exonuclease. Recognizes the chi site generating a DNA molecule suitable for the initiation of homologous recombination. The AddB subunit has 5' -&gt; 3' nuclease activity but not helicase activity. This Listeria innocua serovar 6a (strain ATCC BAA-680 / CLIP 11262) protein is ATP-dependent helicase/deoxyribonuclease subunit B.